Reading from the N-terminus, the 344-residue chain is 17-beta-hydroxysteroid dehydrogenase type 1 (344 aa).

3-32 is an NAD(+) binding site; sequence PTVVLITGCSSGIGMHLAVRLASDRSQSFK. Residues 10-38 and aspartate 66 contribute to the NADP(+) site; that span reads GCSSGIGMHLAVRLASDRSQSFKVYATLR. Residue serine 135 is modified to Phosphoserine. Serine 143 contacts substrate. Residue tyrosine 156 is the Proton acceptor of the active site. Lysine 160 contacts NADP(+).

Belongs to the short-chain dehydrogenases/reductases (SDR) family. As to quaternary structure, homodimer. Exists predominantly as a homodimer but also exits as monomer.

It localises to the cytoplasm. The enzyme catalyses 17beta-estradiol + NAD(+) = estrone + NADH + H(+). It catalyses the reaction 17beta-estradiol + NADP(+) = estrone + NADPH + H(+). The catalysed reaction is testosterone + NADP(+) = androst-4-ene-3,17-dione + NADPH + H(+). It participates in steroid biosynthesis; estrogen biosynthesis. Favors the reduction of estrogens and androgens. Converts estrone (E1) to a more potent estrogen, 17beta-estradiol (E2). Also has 20-alpha-HSD activity. Uses preferentially NADH. This is 17-beta-hydroxysteroid dehydrogenase type 1 from Mus musculus (Mouse).